Reading from the N-terminus, the 887-residue chain is Alanine--tRNA ligase (887 aa).

His-563, His-567, Cys-677, and His-681 together coordinate Zn(2+).

Belongs to the class-II aminoacyl-tRNA synthetase family. The cofactor is Zn(2+).

It is found in the cytoplasm. It catalyses the reaction tRNA(Ala) + L-alanine + ATP = L-alanyl-tRNA(Ala) + AMP + diphosphate. Functionally, catalyzes the attachment of alanine to tRNA(Ala) in a two-step reaction: alanine is first activated by ATP to form Ala-AMP and then transferred to the acceptor end of tRNA(Ala). Also edits incorrectly charged Ser-tRNA(Ala) and Gly-tRNA(Ala) via its editing domain. This Dinoroseobacter shibae (strain DSM 16493 / NCIMB 14021 / DFL 12) protein is Alanine--tRNA ligase.